Consider the following 509-residue polypeptide: Cytochrome P450 monooxygenase FUP2 (509 aa).

2 helical membrane passes run F16–F36 and M224–A244. A heme-binding site is contributed by C450.

This sequence belongs to the cytochrome P450 family. Requires heme as cofactor.

The protein localises to the membrane. It functions in the pathway secondary metabolite biosynthesis. Its function is as follows. Cytochrome P450 monooxygenase; part of the gene cluster that mediates the biosynthesis of the mycotoxin fusaproliferin (FUP) that belongs to the class of bicyclic sesterterpenoids. FUP2 introduces a hydroxyl group at the C-24 position resulting in the formation of preterpestacin IIa, which can be further oxidized. The oxidation of the hydroxyl group at C-24 to an aldehyde and further to a carboxylic group takes place via unspecific alcohol and aldehyde dehydrogenases and leads to the shunt products preterpestacin IIc and preterpestacin IIb, respectively. The FUP biosynthetic pathway starts with the enzyme encoded by FUP1 that combines a C-terminal prenyltransferase domain responsible for the synthesis of geranylgeranyl diphosphate with the N-terminal terpene cyclase domain, to yield preterpestacin I. Preterpestacin I is then decorated by oxygenation steps that are catalyzed by two cytochrome P450 monooxygenases. First, FUP2 introduces a hydroxyl group at the C-24 position resulting in the formation of preterpestacin IIa. The second P450 monooxygenase catalyzes the hydroxylation at C-16 and C-17 of preterpestacin IIa, producing preterpestacin III. Subsequently, the FAD-dependent oxidoreductase FUP4 catalyzes the oxidation of the hydroxy group at the C-16 position to a keto group, leading to the formation of (-)-terpestacin, which is the immediate precursor of FUP. The final step in the proposed biosynthetic pathway is the addition of an acetyl group at the C-24 position of terpestacin, which is catalyzed by the acetyltransferase FUP5. The chain is Cytochrome P450 monooxygenase FUP2 from Fusarium proliferatum (strain ET1) (Orchid endophyte fungus).